Consider the following 149-residue polypeptide: 3-dehydroquinate dehydratase (149 aa).

Residue Tyr-26 is the Proton acceptor of the active site. Asn-77, His-83, and Asp-90 together coordinate substrate. His-103 functions as the Proton donor in the catalytic mechanism. Substrate contacts are provided by residues 104–105 and Arg-114; that span reads LS.

It belongs to the type-II 3-dehydroquinase family. In terms of assembly, homododecamer.

The catalysed reaction is 3-dehydroquinate = 3-dehydroshikimate + H2O. The protein operates within metabolic intermediate biosynthesis; chorismate biosynthesis; chorismate from D-erythrose 4-phosphate and phosphoenolpyruvate: step 3/7. Its function is as follows. Catalyzes a trans-dehydration via an enolate intermediate. This chain is 3-dehydroquinate dehydratase, found in Vibrio parahaemolyticus serotype O3:K6 (strain RIMD 2210633).